The sequence spans 472 residues: Mitochondrial substrate carrier family protein C (472 aa).

At 1-189 the chain is on the mitochondrial intermembrane side; it reads MVLNENDKEF…ASSLRNTITY (189 aa). 4 consecutive EF-hand domains span residues 6–41, 42–70, 73–108, and 110–145; these read NDKE…LRIP, SSEK…FEDF, ENIK…LNIP, and YSEQ…LPNS. Ca(2+)-binding residues include Asp19, Asp21, Asn23, Lys25, Glu30, Asp55, Asp57, Asp59, Ser61, Glu66, Asp86, Asn88, Ser90, Thr92, Glu97, Asp123, Asn125, Asp127, Gln129, and Glu134. Solcar repeat units follow at residues 184–268, 276–362, and 375–461; these read RNTI…VKKL, LTSA…LKHK, and GQLL…FKKA. The helical transmembrane segment at 190 to 207 threads the bilayer; it reads MLAGSVAGFASRTSTAPL. Topologically, residues 208–242 are mitochondrial matrix; sequence ERVKIMCQLNHGKPISLISAFKACYKDGGIKGFFR. The helical transmembrane segment at 243 to 263 threads the bilayer; the sequence is GNLANIIKVSPESAVKFGTYE. At 264 to 281 the chain is on the mitochondrial intermembrane side; that stretch reads YVKKLFAENDCELTSAQR. The chain crosses the membrane as a helical span at residues 282–302; the sequence is FISGSVAGVVSHTTLFPLEVV. The Mitochondrial matrix segment spans residues 303-330; the sequence is RLRLSAEIAGTYNGIFDCFKKIAISEKS. A helical membrane pass occupies residues 331 to 351; it reads IRPFYRGLGASITATIPHSGV. At 352 to 377 the chain is on the mitochondrial intermembrane side; the sequence is NMMVYEFLKHKVIKMTGNEFPTAGQL. Residues 378 to 398 form a helical membrane-spanning segment; it reads LVCASTSSVCGQLVGYPFHVV. At 399 to 441 the chain is on the mitochondrial matrix side; it reads KSRLITQGSSVNQEKYTGLFDGLTKIIKKEGPIGLYKGIVPSF. The chain crosses the membrane as a helical span at residues 442–462; sequence MKSIPSHSITFIVYEGFKKAF. Residues 463 to 472 are Mitochondrial intermembrane-facing; sequence DVNLKEKKHH.

The protein belongs to the mitochondrial carrier (TC 2.A.29) family.

It localises to the mitochondrion inner membrane. In terms of biological role, calcium-dependent mitochondrial solute carrier. Mitochondrial solute carriers shuttle metabolites, nucleotides, and cofactors through the mitochondrial inner membrane. The protein is Mitochondrial substrate carrier family protein C (mcfC) of Dictyostelium discoideum (Social amoeba).